Consider the following 116-residue polypeptide: HTH-type transcriptional regulator SarV (116 aa).

The H-T-H motif DNA-binding region spans 51–74 (RDTLHFEMLWDTSKIDVIIRKIYK).

This sequence belongs to the SarA family.

It localises to the cytoplasm. In terms of biological role, part of the pathway by which MgrA and SarA control autolysis. This chain is HTH-type transcriptional regulator SarV (sarV), found in Staphylococcus aureus (strain Mu50 / ATCC 700699).